The primary structure comprises 690 residues: Protein hook (690 aa).

A Calponin-homology (CH) domain is found at 6 to 122 (MEIYESLIRW…RLLQLILGCA (117 aa)). Coiled-coil stretches lie at residues 134–515 (QIME…HHAE) and 546–577 (ETTQ…QAAD).

Belongs to the hook family. In terms of assembly, homodimer. Interacts with microtubules via its N-terminus.

The protein resides in the cytoplasm. The protein localises to the cytoskeleton. Its subcellular location is the endosome. In terms of biological role, involved in endocytic trafficking. Probably acts as a cytoskeletal linker protein that tethers endosome vesicles to the cytoskeleton. This Anopheles gambiae (African malaria mosquito) protein is Protein hook.